A 180-amino-acid chain; its full sequence is MSYSVSAAQLWSRKLAMQAEDMQQHQKSQSNQIASCLAEMNTKQEVVNQTIGQLGRSISEVQQQNSQLVLQSLNQINMSMQQVALGIQDYASRINKLEQTMSDMNLKFEALQKEQNSNTKTLADCTSQMTIITKKLDAELKKRYMTTKQTRTVQNQTMPRSNTTTKKRVLAIDFLADDDY.

As to quaternary structure, homomer. Interacts (via C-terminus) with hop1 (via C-terminus); the interaction is direct. Interacts (via C-terminus) with rec10; the interaction is direct. Interacts with mde2; the interaction is direct.

It is found in the nucleus. The protein resides in the chromosome. Required during the early stages of meiosis for meiotic recombination. The polypeptide is Meiotic recombination protein rec15 (Schizosaccharomyces pombe (strain 972 / ATCC 24843) (Fission yeast)).